A 562-amino-acid polypeptide reads, in one-letter code: MTLLSYLSSLCREAILSAFPQIETISPDITQSTKELFGHYQCNDAMKLARTLKMPPRAIAESIVKQISKNNFSSIEIAGAGFINFTFSKEFLNLSLQSYSRDLSSGFRVQDPKKVVIDFSSPNIAKDMHVGHLRSTIIGDCLARIFTFVGHDVLRLNHIGDWGTAFGMLITYLQEESSEDIESLEDLTILYKKAHVRFAEDAEFKKRSQTNVVALQSGDPKARKLWERICEISERAFQKIYNILDIQIEKRGESFYNPFLPEIIEDLEKKNLITVSDEAKCVFHEGFSIPLMVQKRDGGYNYATTDLAAMRYRVEQDHADRIIIVTDMGQSLHFQLLEATALAAGYLPNKDVFSHVGFGLVLDSEGKKFKTRSGENIKLQELLDTAIDQAVATLKKHRPEMSDAEITERAPVLGMNAIKYADLSSHRVSDYVFSFEKMLRFEGNTAMFILYGYVRIQGIKRRLGIEKLSLESAANIQEPSEEALALALLRFPEAIDITLKELCPHFLTDYLYMLTNKFHAFFRDCHIEGSPHQKERLYLCALVEKTLATGMHLLGLQTLDRL.

A 'HIGH' region motif is present at residues 122-132 (PNIAKDMHVGH).

Belongs to the class-I aminoacyl-tRNA synthetase family. Monomer.

The protein localises to the cytoplasm. It carries out the reaction tRNA(Arg) + L-arginine + ATP = L-arginyl-tRNA(Arg) + AMP + diphosphate. The polypeptide is Arginine--tRNA ligase (Chlamydia abortus (strain DSM 27085 / S26/3) (Chlamydophila abortus)).